Reading from the N-terminus, the 331-residue chain is Cytosolic 5'-nucleotidase 3A (331 aa).

The Nucleophile role is filled by aspartate 83. Mg(2+) is bound by residues aspartate 83 and aspartate 85. Aspartate 85 serves as the catalytic Proton donor. Glutamate 130 contacts CMP. Residues glutamate 130 and serine 151 each coordinate N(7)-methyl-GMP. Substrate is bound by residues serine 198–alanine 199 and lysine 247. Position 272 (aspartate 272) interacts with Mg(2+).

The protein belongs to the pyrimidine 5'-nucleotidase family.

Its subcellular location is the cytoplasm. It carries out the reaction N(7)-methyl-GMP + H2O = N(7)-methylguanosine + phosphate. The enzyme catalyses a ribonucleoside 5'-phosphate + H2O = a ribonucleoside + phosphate. Its function is as follows. Nucleotidase which shows specific activity towards cytidine monophosphate (CMP) and 7-methylguanosine monophosphate (m(7)GMP). CMP seems to be the preferred substrate. The sequence is that of Cytosolic 5'-nucleotidase 3A (NT5C3A) from Gallus gallus (Chicken).